Here is an 81-residue protein sequence, read N- to C-terminus: uncharacterized protein (81 aa).

The protein to M.thermoautotrophicum MTH886.

This is an uncharacterized protein from Methanocaldococcus jannaschii (strain ATCC 43067 / DSM 2661 / JAL-1 / JCM 10045 / NBRC 100440) (Methanococcus jannaschii).